Here is a 70-residue protein sequence, read N- to C-terminus: U-scoloptoxin(04)-Er3a (70 aa).

An N-terminal signal peptide occupies residues 1-24; the sequence is MAAIRNLLILTMLLIVCVSWNADA.

The protein belongs to the scoloptoxin-04 family. In terms of processing, contains 2 disulfide bonds. In terms of tissue distribution, expressed by the venom gland.

It is found in the secreted. This Ethmostigmus rubripes (Giant centipede) protein is U-scoloptoxin(04)-Er3a.